The primary structure comprises 233 residues: Sugar fermentation stimulation protein homolog (233 aa).

It belongs to the SfsA family.

The protein is Sugar fermentation stimulation protein homolog of Saccharophagus degradans (strain 2-40 / ATCC 43961 / DSM 17024).